We begin with the raw amino-acid sequence, 514 residues long: Vacuolar aminopeptidase 1 (514 aa).

The propeptide at 1-45 (MEEQREILEQLKKTLQMLTVEPSKNNQIANEEKEKKENENSWCIL) is required for vacuolar localization. Mediates aggregation and vesicle formation in Cvt pathway. 2 N-linked (GlcNAc...) asparagine glycosylation sites follow: Asn-107 and Asn-110. His-132 contributes to the Zn(2+) binding site. His-210 lines the substrate pocket. Asp-303, Glu-339, and Glu-340 together coordinate Zn(2+). Residue Glu-339 participates in substrate binding. Position 356 is a phosphoserine (Ser-356). Asp-385 serves as a coordination point for Zn(2+). Substrate-binding residues include Asp-385 and His-388. A glycan (N-linked (GlcNAc...) asparagine) is linked at Asn-448. His-479 provides a ligand contact to Zn(2+).

Belongs to the peptidase M18 family. As to quaternary structure, homododecamer. The precursor form of aminopeptidase 1 (prApe1) assembles into dodecamers and further aggregates into higher multimers (the Ape1 complex) in the cytoplasm. The Ape1 complex is disaggregated in the vacuolar lumen, but mature aminopeptidase 1 (mApe1) retains its dodecameric form. Dodecamer assembly in the cytoplasm is essential for formation of an enzymatically active complex. If cytoplasmic homododecamerization of prApe1 is disturbed in mutants, homododecamers of mApe1 will form in the vacuole, but they are enzymatically inactive. Interacts with ATG19. Zn(2+) is required as a cofactor. Post-translationally, synthesized in a precursor form (prApe1) that has an amino-terminal propeptide. The N-terminal extension of the 61 kDa precursor is proteolytically processed in two sequential steps. The first step involves proteinase A (PrA/PEP4) and produces a 55 kDa unstable intermediate (iAPI). The second step involves proteinase B (PrB/PRB1) and converts iAPI into the 50 kDa stable, mature enzyme (mApe1).

Its subcellular location is the vacuole. The enzyme catalyses Release of an N-terminal amino acid, preferably a neutral or hydrophobic one, from a polypeptide. Aminoacyl-arylamides are poor substrates.. Its activity is regulated as follows. Strongly and specifically activated by Cl(-) and Br(-), which act as positive allosteric effectors. Inactivated by metal-chelating agents. Functionally, resident vacuolar enzyme that catalyzes the removal of amino acids from the N-terminus of peptides and proteins. Also acts as the major cargo protein of the cytoplasm-to-vacuole targeting (Cvt) pathway. The precursor form of aminopeptidase 1 (prApe1) assembles into dodecamers and the propeptide mediates the aggregation of dodecamers into higher multimers. The multimers are then recognized via the propeptide by their receptor ATG19, and ATG19 further interacts with ATG11, which tethers the APE1-ATG19 complex to the pre-autophagosomal structure (PAS). The cargo-receptor complex (also Cvt complex) is selectively enwrapped by a double-membrane structure termed the Cvt vesicle under vegetative growth conditions and by a similar but larger double-membrane structure termed the autophagosome under nitrogen starvation conditions. The Cvt vesicle or the autophagosome fuses with the vacuolar membrane and release its content in the vacuolar lumen. In the vacuole, prApe1 is processed into mature aminopeptidase 1 (mApe1). The sequence is that of Vacuolar aminopeptidase 1 from Saccharomyces cerevisiae (strain ATCC 204508 / S288c) (Baker's yeast).